Consider the following 314-residue polypeptide: tRNA dimethylallyltransferase 2 (314 aa).

An ATP-binding site is contributed by Gly-8–Ser-15. A substrate-binding site is contributed by Thr-10–Ser-15.

The protein belongs to the IPP transferase family. In terms of assembly, monomer. The cofactor is Mg(2+).

It carries out the reaction adenosine(37) in tRNA + dimethylallyl diphosphate = N(6)-dimethylallyladenosine(37) in tRNA + diphosphate. Catalyzes the transfer of a dimethylallyl group onto the adenine at position 37 in tRNAs that read codons beginning with uridine, leading to the formation of N6-(dimethylallyl)adenosine (i(6)A). In Mycobacterium ulcerans (strain Agy99), this protein is tRNA dimethylallyltransferase 2.